The primary structure comprises 357 residues: tRNA N6-adenosine threonylcarbamoyltransferase (357 aa).

Fe cation-binding residues include H115 and H119. Residues 137–141 (LASGG), D170, G183, and N281 contribute to the substrate site. D309 serves as a coordination point for Fe cation.

It belongs to the KAE1 / TsaD family. The cofactor is Fe(2+).

It localises to the cytoplasm. It catalyses the reaction L-threonylcarbamoyladenylate + adenosine(37) in tRNA = N(6)-L-threonylcarbamoyladenosine(37) in tRNA + AMP + H(+). In terms of biological role, required for the formation of a threonylcarbamoyl group on adenosine at position 37 (t(6)A37) in tRNAs that read codons beginning with adenine. Is involved in the transfer of the threonylcarbamoyl moiety of threonylcarbamoyl-AMP (TC-AMP) to the N6 group of A37, together with TsaE and TsaB. TsaD likely plays a direct catalytic role in this reaction. The protein is tRNA N6-adenosine threonylcarbamoyltransferase of Bradyrhizobium diazoefficiens (strain JCM 10833 / BCRC 13528 / IAM 13628 / NBRC 14792 / USDA 110).